Consider the following 344-residue polypeptide: Ribosomal RNA large subunit methyltransferase Cfr (344 aa).

The Proton acceptor role is filled by E90. Residues K97–E330 enclose the Radical SAM core domain. An intrachain disulfide couples C104 to C335. Positions 111, 115, and 118 each coordinate [4Fe-4S] cluster. S-adenosyl-L-methionine-binding positions include G157–E158, S188, S211–H213, and N292. C335 (S-methylcysteine intermediate) is an active-site residue.

It belongs to the radical SAM superfamily. RlmN family. Cfr subfamily. The cofactor is [4Fe-4S] cluster.

The protein localises to the cytoplasm. The enzyme catalyses adenosine(2503) in 23S rRNA + 2 reduced [2Fe-2S]-[ferredoxin] + 2 S-adenosyl-L-methionine = 8-methyladenosine(2503) in 23S rRNA + 5'-deoxyadenosine + L-methionine + 2 oxidized [2Fe-2S]-[ferredoxin] + S-adenosyl-L-homocysteine. In terms of biological role, specifically methylates position 8 of adenine 2503 in 23S rRNA. Confers resistance to some classes of antibiotics. This Clostridium botulinum (strain Langeland / NCTC 10281 / Type F) protein is Ribosomal RNA large subunit methyltransferase Cfr.